The chain runs to 613 residues: MARCRHHSGYLADDEASHSMCSARVQLPKKPLVPEMRPACKPGRVPHPPSTCGSSALQGQRRNKRHPQPFGHFLDFLTESQVLDSLETVVEKATERMAAMKTEAGVPLVEVQDPVEVPSGGRRAHARPSLSTVHRHRVRPTLCTGHPNNYPSSSSSMSNCHSSLMAGCLGSHSRDSDLGAQGSLPPVRDKLLLEKNLKRLLQLEREGKGLSQSCSQRDSLLWDSLGSQTSFQWTQEQPLSWFSGLLGSSSGVPEASEPRPGEQEPIFRKREFNKEIKSLLSQLESLDLPGYCPLREPHRTLNFLADHRLFPALQSVVSQAVDKLRGAHCRDGRPLFPTSLEPTSDLPPLGSEPAKPTNGGQPYASPRPTVSSPKMLQRKRKDRGGSPSMSSAQVATRFKLKSPCSSSRFTKKKPLPSISSKSSMSHFSNRLYEELADFLTQQAASLVIRKYEFEKDLSKQLGFFSFPITHVLRDLSLGLKKVKGSRIHLSSETHRSCLLRKLEESKRARQASRLSTSHCSTETPSVQQEPATHTAQDQATEPCRSLYTNLPASRQLSPLEPKLYMSACTGMGSSPPKSKDMDNEGRDKAEIEDEDEDEFKDEDQDEDKDEDGV.

The segment at 41–68 (KPGRVPHPPSTCGSSALQGQRRNKRHPQ) is disordered. Positions 51–60 (TCGSSALQGQ) are enriched in polar residues. Positions 79–104 (ESQVLDSLETVVEKATERMAAMKTEA) form a coiled coil. Disordered stretches follow at residues 329–395 (CRDG…AQVA), 509–541 (RQAS…QATE), and 565–613 (MSAC…EDGV). Ser386 bears the Phosphoserine mark. The span at 512-539 (SRLSTSHCSTETPSVQQEPATHTAQDQA) shows a compositional bias: polar residues. A compositionally biased stretch (basic and acidic residues) spans 577 to 589 (KSKDMDNEGRDKA). Positions 590–613 (EIEDEDEDEFKDEDQDEDKDEDGV) are enriched in acidic residues.

It is found in the cytoplasm. Its subcellular location is the cytoskeleton. It localises to the microtubule organizing center. The protein localises to the centrosome. This Homo sapiens (Human) protein is Coiled-coil domain-containing protein 116 (CCDC116).